A 403-amino-acid chain; its full sequence is 5,7-dihydroxy-2-methylchromone synthase (403 aa).

Histidine 68 contributes to the CoA binding site. Cysteine 174 is a catalytic residue. Cysteine 174 bears the Cysteine sulfinic acid (-SO2H) mark. CoA contacts are provided by residues leucine 277, serine 281, and 318–321; that span reads GGRA.

It belongs to the thiolase-like superfamily. Chalcone/stilbene synthases family. In terms of assembly, homodimer.

It catalyses the reaction 5 malonyl-CoA + 4 H(+) = 5,7-dihydroxy-2-methyl-4H-chromen-4-one + 5 CO2 + 5 CoA + H2O. The protein operates within secondary metabolite biosynthesis; flavonoid biosynthesis. Functionally, catalyzes the iterative condensations of 5 molecules of malonyl-CoA to produce a pentaketide 5,7-dihydroxy-2-methylchromone. This Aloe arborescens (Kidachi aloe) protein is 5,7-dihydroxy-2-methylchromone synthase.